A 341-amino-acid chain; its full sequence is tRNA N6-adenosine threonylcarbamoyltransferase (341 aa).

Fe cation-binding residues include His113 and His117. Substrate-binding positions include 141-145, Asp174, Gly187, and Asn282; that span reads LVSGG. Asp310 serves as a coordination point for Fe cation.

It belongs to the KAE1 / TsaD family. Fe(2+) serves as cofactor.

The protein localises to the cytoplasm. It catalyses the reaction L-threonylcarbamoyladenylate + adenosine(37) in tRNA = N(6)-L-threonylcarbamoyladenosine(37) in tRNA + AMP + H(+). Functionally, required for the formation of a threonylcarbamoyl group on adenosine at position 37 (t(6)A37) in tRNAs that read codons beginning with adenine. Is involved in the transfer of the threonylcarbamoyl moiety of threonylcarbamoyl-AMP (TC-AMP) to the N6 group of A37, together with TsaE and TsaB. TsaD likely plays a direct catalytic role in this reaction. This Porphyromonas gingivalis (strain ATCC BAA-308 / W83) protein is tRNA N6-adenosine threonylcarbamoyltransferase.